Consider the following 776-residue polypeptide: FT-interacting protein 4 (776 aa).

Over residues 1 to 16 (MQRPPPEDFSLKETKP) the composition is skewed to basic and acidic residues. The interval 1-23 (MQRPPPEDFSLKETKPHLGGGKV) is disordered. 3 consecutive C2 domains span residues 22–142 (KVTG…PQWY), 181–305 (VSGT…SRWF), and 346–474 (YSSD…THSY). Ca(2+) is bound by residues Asp-55, Asp-61, Asp-108, Asp-110, and Asp-115. Transmembrane regions (helical) follow at residues 577 to 597 (IMGV…ICVW), 608 to 628 (ILFI…FLYL), and 719 to 739 (LFVL…FQVV).

The protein belongs to the MCTP family. As to quaternary structure, interacts with and regulates subcellular localization and trafficking of STM. The cofactor is Ca(2+). In terms of tissue distribution, highly expressed in both vegetative and inflorescence shoot apical meristems (SAMs). Accumulates in root meristems. Observed in flowers.

It is found in the endoplasmic reticulum membrane. It localises to the cytoplasm. Its subcellular location is the vesicle. The protein resides in the cell membrane. The protein localises to the endosome membrane. It is found in the golgi apparatus membrane. Required for proliferation and differentiation of shoot stem cells in the shoot apical meristem (SAM), thus determining the appropriate balance between the maintenance of shoot stem cells and their differentiation into other aboveground plant parts via the control of subcellular localization and intercellular trafficking of STM in the shoot apex. Prevents intracellular trafficking of STM to the plasma membrane in cells in the peripheral shoot meristem region thus facilitating STM recycling to the nucleus to maintain stem cells. May function as a signaling molecule by regulating the trafficking of other regulators. The sequence is that of FT-interacting protein 4 from Arabidopsis thaliana (Mouse-ear cress).